The following is a 445-amino-acid chain: 3-phosphoshikimate 1-carboxyvinyltransferase (445 aa).

The disordered stretch occupies residues 1–25 (MTDSNQPTPLQARKSGALHGTARVP). Positions 28, 29, and 33 each coordinate 3-phosphoshikimate. Lys-28 serves as a coordination point for phosphoenolpyruvate. Positions 101 and 129 each coordinate phosphoenolpyruvate. Residues Ser-175, Gln-177, Asp-328, and Lys-355 each coordinate 3-phosphoshikimate. Gln-177 lines the phosphoenolpyruvate pocket. Asp-328 functions as the Proton acceptor in the catalytic mechanism. Residues Arg-359 and Arg-402 each coordinate phosphoenolpyruvate.

This sequence belongs to the EPSP synthase family. As to quaternary structure, monomer.

The protein localises to the cytoplasm. The enzyme catalyses 3-phosphoshikimate + phosphoenolpyruvate = 5-O-(1-carboxyvinyl)-3-phosphoshikimate + phosphate. It participates in metabolic intermediate biosynthesis; chorismate biosynthesis; chorismate from D-erythrose 4-phosphate and phosphoenolpyruvate: step 6/7. In terms of biological role, catalyzes the transfer of the enolpyruvyl moiety of phosphoenolpyruvate (PEP) to the 5-hydroxyl of shikimate-3-phosphate (S3P) to produce enolpyruvyl shikimate-3-phosphate and inorganic phosphate. This Rhodopseudomonas palustris (strain TIE-1) protein is 3-phosphoshikimate 1-carboxyvinyltransferase.